Reading from the N-terminus, the 199-residue chain is Ion-translocating oxidoreductase complex subunit A (199 aa).

A run of 6 helical transmembrane segments spans residues 8–28, 49–69, 75–95, 106–126, 138–158, and 178–198; these read LFTI…QFLG, VVFV…FILV, FLRT…VEFI, SLGI…AVLL, VVFG…MAAI, and AFFI…VIPL.

This sequence belongs to the NqrDE/RnfAE family. As to quaternary structure, the Rnf complex is probably composed of eight subunits, including RnfA, RnfB, RnfC, RnfD, RnfE and RnfG.

The protein localises to the cell membrane. Its function is as follows. Part of a membrane-bound complex that couples electron transfer with translocation of ions across the membrane. Catalyzes Na(+) transport, most probably coupled to electron transfer from reduced ferredoxin to methanophenazine and heterodisulfide reductase. Involved in heterodisulfide reduction during methanogenesis from acetate. This Methanosarcina acetivorans (strain ATCC 35395 / DSM 2834 / JCM 12185 / C2A) protein is Ion-translocating oxidoreductase complex subunit A.